Reading from the N-terminus, the 538-residue chain is MFS-type transporter oryC (538 aa).

6 helical membrane-spanning segments follow: residues 14-34 (LTGG…MSLF), 67-87 (TVTA…FTIG), 96-116 (ILLG…SFSL), 120-140 (FVGR…APIW), 162-182 (IFGF…GGSI), and 186-206 (FPLA…PWLP). N-linked (GlcNAc...) asparagine glycosylation occurs at Asn-268. 6 helical membrane passes run 288 to 308 (FGGI…SVGL), 315 to 335 (LLAA…VLLV), 342 to 362 (GLML…TILL), 379 to 399 (VAFF…VPWL), 416 to 436 (VATA…PIGI), and 443 to 463 (FWIV…FLYP). The N-linked (GlcNAc...) asparagine glycan is linked to Asn-467.

It belongs to the major facilitator superfamily. Sugar transporter (TC 2.A.1.1) family.

The protein localises to the membrane. Its function is as follows. MFS-type transporter; part of the gene cluster that mediates the biosynthesis of oryzines, natural products with an unusual maleidride backbone. This is MFS-type transporter oryC from Aspergillus oryzae (strain ATCC 42149 / RIB 40) (Yellow koji mold).